A 132-amino-acid polypeptide reads, in one-letter code: MAPSPRTSSRQDATALPSMSSTFWAFMILASLLIAYCSQLAAGTCEIVTLDRDSSQPRRTIARQTARCACRKGQIAGTTRARPACVDARIIKTKQWCDMLPCLEGEGCDLLINRSGWTCTQPGGRIKTTTVS.

Residues 1-43 (MAPSPRTSSRQDATALPSMSSTFWAFMILASLLIAYCSQLAAG) form the signal peptide. An N-linked (GlcNAc...) asparagine glycan is attached at N113.

It belongs to the TAFA family. As to expression, expressed in the subcutaneous, brown, epididymal and perirenal adipose tissue (at protein level).

It localises to the secreted. In terms of biological role, acts as a chemokine-like protein by regulating cell proliferation and migration through activation of G protein-coupled receptors (GPCRs), such as S1PR2 and FPR2. Stimulates chemotactic migration of macrophages mediated by the MAPK3/ERK1 and AKT1 pathway. Blocks TNFSF11/RANKL-induced osteoclast formation from macrophages by inhibiting up-regulation of osteoclast fusogenic and differentiation genes. Stimulation of macrophage migration and inhibition of osteoclast formation is mediated through the GPCR FPR2. Acts as an adipokine by negatively regulating vascular smooth muscle cell (VSMC) proliferation and migration in response to platelet-derived growth factor stimulation via GPCR S1PR2 and G protein GNA12/GNA13-transmitted RHOA signaling. Inhibits injury-induced cell proliferation and neointima formation in the femoral arteries. This chain is Chemokine-like protein TAFA-5 (Tafa5), found in Mus musculus (Mouse).